The following is a 441-amino-acid chain: Ribosomal protein uS12 methylthiotransferase RimO (441 aa).

Positions 8–118 constitute an MTTase N-terminal domain; it reads PKIGFVSLGC…VLQHVHHYVP (111 aa). Positions 17, 53, 82, 150, 154, and 157 each coordinate [4Fe-4S] cluster. A Radical SAM core domain is found at 136–373; it reads LTPRHYAYLK…MQLQQQISAE (238 aa). The TRAM domain maps to 376 to 441; the sequence is QEKVGREILV…DEYDLWGSRV (66 aa).

The protein belongs to the methylthiotransferase family. RimO subfamily. [4Fe-4S] cluster serves as cofactor.

It is found in the cytoplasm. It catalyses the reaction L-aspartate(89)-[ribosomal protein uS12]-hydrogen + (sulfur carrier)-SH + AH2 + 2 S-adenosyl-L-methionine = 3-methylsulfanyl-L-aspartate(89)-[ribosomal protein uS12]-hydrogen + (sulfur carrier)-H + 5'-deoxyadenosine + L-methionine + A + S-adenosyl-L-homocysteine + 2 H(+). In terms of biological role, catalyzes the methylthiolation of an aspartic acid residue of ribosomal protein uS12. The polypeptide is Ribosomal protein uS12 methylthiotransferase RimO (Salmonella arizonae (strain ATCC BAA-731 / CDC346-86 / RSK2980)).